A 404-amino-acid chain; its full sequence is Tryptophan synthase beta chain (404 aa).

K94 bears the N6-(pyridoxal phosphate)lysine mark.

The protein belongs to the TrpB family. In terms of assembly, tetramer of two alpha and two beta chains. Pyridoxal 5'-phosphate is required as a cofactor.

It catalyses the reaction (1S,2R)-1-C-(indol-3-yl)glycerol 3-phosphate + L-serine = D-glyceraldehyde 3-phosphate + L-tryptophan + H2O. It participates in amino-acid biosynthesis; L-tryptophan biosynthesis; L-tryptophan from chorismate: step 5/5. In terms of biological role, the beta subunit is responsible for the synthesis of L-tryptophan from indole and L-serine. The protein is Tryptophan synthase beta chain of Staphylococcus aureus (strain USA300).